The sequence spans 528 residues: Cytochrome P450 monooxygenase polB (528 aa).

Residues 3–23 traverse the membrane as a helical segment; that stretch reads SFFLVCPVAFLGFTICYLVYV. Position 473 (Cys-473) interacts with heme.

The protein belongs to the cytochrome P450 family. Heme is required as a cofactor.

The protein localises to the membrane. The enzyme catalyses 4beta-carboxyl motiol + reduced [NADPH--hemoprotein reductase] + O2 = 2alpha-hydroxyl, 4beta-carboxyl motiol + oxidized [NADPH--hemoprotein reductase] + H2O + H(+). It carries out the reaction 2-deoxypolytolypin + reduced [NADPH--hemoprotein reductase] + O2 = polytolypin + oxidized [NADPH--hemoprotein reductase] + H2O + H(+). It functions in the pathway secondary metabolite biosynthesis; terpenoid biosynthesis. Its function is as follows. Cytochrome P450 monooxygenase; part of the gene cluster that mediates the biosynthesis of antifungal fernane-type triterpenoid polytolypin. PolB acts as a hydroxylase and installs the 2-alpha-hydroxyl group in polytolypin. Within the pathway, the triterpene cyclase polA first catalyzes the cyclization of 2,3-oxidosqualene to motiol, polC converts the 4-alpha-methyl group of motiol to a carboxyl group, polB is responsible for appending a hydroxyl group at the 2-alpha position and polE is a dual functional P450, which can catalyze the formation of both the 1-beta-hydroxyl group and 10-beta-carboxyl group. The sequence is that of Cytochrome P450 monooxygenase polB from Polytolypa hystricis (strain UAMH7299).